The following is a 600-amino-acid chain: Zinc metalloproteinase-disintegrin-like stejnihagin-B (600 aa).

The signal sequence occupies residues 1–20 (MIEVLLVTICLAVFPYQGSS). Residues 21–191 (IILESGNVND…KASQLVVTAE (171 aa)) constitute a propeptide that is removed on maturation. Pyrrolidone carboxylic acid is present on Q192. In terms of domain architecture, Peptidase M12B spans 198-389 (RYVKLAIVAD…YNPQCILNAL (192 aa)). 2 N-linked (GlcNAc...) asparagine glycosylation sites follow: N261 and N317. Cystine bridges form between C306/C384, C346/C368, and C348/C351. H331 is a binding site for Zn(2+). The active site involves E332. Zn(2+) is bound by residues H335 and H341. One can recognise a Disintegrin domain in the interval 397–483 (PPVCGNELLE…DCPTDSFHRN (87 aa)). V399, N402, L404, E406, E409, and D412 together coordinate Ca(2+). Cystine bridges form between C400–C429, C411–C424, C413–C419, C423–C446, C437–C443, C442–C468, C455–C475, C462–C494, C487–C499, C506–C556, C521–C565, C534–C544, C551–C587, and C581–C593. Residue N425 is glycosylated (N-linked (GlcNAc...) asparagine). Residues 461–463 (ECD) carry the D/ECD-tripeptide motif. The N-linked (GlcNAc...) asparagine glycan is linked to N467. A glycan (N-linked (GlcNAc...) asparagine) is linked at N513.

Belongs to the venom metalloproteinase (M12B) family. P-III subfamily. P-IIIa sub-subfamily. As to quaternary structure, monomer. The cofactor is Zn(2+). Expressed by the venom gland.

Its subcellular location is the secreted. In terms of biological role, this metalloproteinase-disintegrin-like impairs hemostasis in the envenomed animal. The protein is Zinc metalloproteinase-disintegrin-like stejnihagin-B of Trimeresurus stejnegeri (Chinese green tree viper).